Reading from the N-terminus, the 479-residue chain is MTVNTFDPSKASPVTHASDSASKTPEPNAVAAPSSELGNRVGFVSLGCPKALVDSERILTQLKLDGYDVVPSYNDADVVVVNTCGFIDSAKQESLDAIGEAMKENGKVIVTGCMGKGNDAQVIKETYPNVLSVTGPAAYEEVMGAVHGYIPPKKEHNPLIDLVPPQGVKLTPRHYAYLKISEGCNHRCTFCIIPDMRGDLVSRPIGDVLGEAERLVAAGTKEILVISQDTSAYGVDVKYRTGFWQGRPVKTRMLEMCEALGELGAWVRLHYVYPYPHVDNVIPLMAEGKILPYLDIPFQHASPQVLKNMRRPAHQEKTLERLAKWREMCPELVLRSTFVVGFPGETEQDFQILLDWLQEAQLDRVGCFEYSPVEGAKANALPNHVPDEVKRERWERFMETQQAISAAKLKQKVGYEMDVIIDSIDGDIATGRTYADAPEIDGVVTFSGAAGMKVGEFSAVEITGSDDYDLTGIAVEDEQ.

The tract at residues 1–34 (MTVNTFDPSKASPVTHASDSASKTPEPNAVAAPS) is disordered. Residues 15–25 (THASDSASKTP) show a composition bias toward polar residues. An MTTase N-terminal domain is found at 39–151 (NRVGFVSLGC…VMGAVHGYIP (113 aa)). Residues Cys48, Cys84, Cys113, Cys184, Cys188, and Cys191 each contribute to the [4Fe-4S] cluster site. The Radical SAM core domain maps to 170 to 407 (LTPRHYAYLK…METQQAISAA (238 aa)). The TRAM domain occupies 410–476 (KQKVGYEMDV…DYDLTGIAVE (67 aa)).

Belongs to the methylthiotransferase family. RimO subfamily. [4Fe-4S] cluster serves as cofactor.

The protein localises to the cytoplasm. It carries out the reaction L-aspartate(89)-[ribosomal protein uS12]-hydrogen + (sulfur carrier)-SH + AH2 + 2 S-adenosyl-L-methionine = 3-methylsulfanyl-L-aspartate(89)-[ribosomal protein uS12]-hydrogen + (sulfur carrier)-H + 5'-deoxyadenosine + L-methionine + A + S-adenosyl-L-homocysteine + 2 H(+). In terms of biological role, catalyzes the methylthiolation of an aspartic acid residue of ribosomal protein uS12. This is Ribosomal protein uS12 methylthiotransferase RimO from Saccharophagus degradans (strain 2-40 / ATCC 43961 / DSM 17024).